The sequence spans 76 residues: uncharacterized protein (76 aa).

This is an uncharacterized protein from Bacillus subtilis (strain 168).